A 637-amino-acid chain; its full sequence is Poly [ADP-ribose] polymerase 2 (637 aa).

A DNA-binding region spans residues 1–140; the sequence is MANKLKVDEL…KKEEKIVTAT (140 aa). Positions 2–36 constitute an SAP 1 domain; that stretch reads ANKLKVDELRLKLAERGLSTTGVKAVLVERLEEAI. Positions 35–46 are enriched in basic and acidic residues; it reads AIAEDTKKEESK. Residues 35–56 are disordered; the sequence is AIAEDTKKEESKSKRKRNSSND. A Nuclear localization signal motif is present at residues 41 to 62; that stretch reads KKEESKSKRKRNSSNDTYESNK. The region spanning 69–103 is the SAP 2 domain; it reads FRGMIVKELREEAIKRGLDTTGTKKDLLERLCNDA. The span at 106–117 shows a compositional bias: polar residues; the sequence is VSNAPVKSSNGT. The segment at 106-134 is disordered; sequence VSNAPVKSSNGTDEAEDDNNGFEEEKKEE. Over residues 118 to 127 the composition is skewed to acidic residues; that stretch reads DEAEDDNNGF. The WGR domain occupies 158 to 255; it reads QYHVLQRGDD…KEFIPHPKSY (98 aa). A PARP alpha-helical domain is found at 286–404; that stretch reads QSKLDTRVAK…EIELATKLLS (119 aa). A PARP catalytic domain is found at 412-637; sequence DPLYYHYQQL…VIQVKFNYKH (226 aa).

Belongs to the ARTD/PARP family.

The protein localises to the nucleus. It carries out the reaction NAD(+) + (ADP-D-ribosyl)n-acceptor = nicotinamide + (ADP-D-ribosyl)n+1-acceptor + H(+).. The catalysed reaction is L-aspartyl-[protein] + NAD(+) = 4-O-(ADP-D-ribosyl)-L-aspartyl-[protein] + nicotinamide. It catalyses the reaction L-glutamyl-[protein] + NAD(+) = 5-O-(ADP-D-ribosyl)-L-glutamyl-[protein] + nicotinamide. Its function is as follows. Involved in the base excision repair (BER) pathway, by catalyzing the poly(ADP-ribosyl)ation of a limited number of acceptor proteins involved in chromatin architecture and in DNA metabolism. This modification follows DNA damages and appears as an obligatory step in a detection/signaling pathway leading to the reparation of DNA strand breaks. This chain is Poly [ADP-ribose] polymerase 2 (PARP2), found in Arabidopsis thaliana (Mouse-ear cress).